A 562-amino-acid chain; its full sequence is Potassium-transporting ATPase potassium-binding subunit (562 aa).

Helical transmembrane passes span F6–F26, Y62–M82, G132–I152, L175–L195, F253–V273, L283–L303, F327–V347, A356–V376, G379–G399, M416–L436, L483–I503, and L526–A546.

Belongs to the KdpA family. The system is composed of three essential subunits: KdpA, KdpB and KdpC.

Its subcellular location is the cell inner membrane. Functionally, part of the high-affinity ATP-driven potassium transport (or Kdp) system, which catalyzes the hydrolysis of ATP coupled with the electrogenic transport of potassium into the cytoplasm. This subunit binds the periplasmic potassium ions and delivers the ions to the membrane domain of KdpB through an intramembrane tunnel. The polypeptide is Potassium-transporting ATPase potassium-binding subunit (Yersinia pseudotuberculosis serotype I (strain IP32953)).